The sequence spans 376 residues: Protein FAM199X (376 aa).

The span at 237–253 (YIKEHSPRQRSTRESWK) shows a compositional bias: basic and acidic residues. A disordered region spans residues 237 to 350 (YIKEHSPRQR…QRQARKERLS (114 aa)). A compositionally biased stretch (low complexity) spans 255–300 (TSYSTASTSGVSGASVSSSSASMVSTASSTGSSGGNSASNSSANMS). Over residues 318 to 337 (DSKKRSKQRKLQQKALRKRQ) the composition is skewed to basic residues. A coiled-coil region spans residues 320-349 (KKRSKQRKLQQKALRKRQLKEQRQARKERL). A compositionally biased stretch (basic and acidic residues) spans 338–349 (LKEQRQARKERL).

It belongs to the FAM199 family.

This chain is Protein FAM199X (fam199x), found in Xenopus tropicalis (Western clawed frog).